The primary structure comprises 152 residues: Methylglyoxal synthase (152 aa).

The region spanning 5–152 (TRTVQAQKHI…YQLYLQQRLK (148 aa)) is the MGS-like domain. Residues H19, K23, 45–48 (TGTT), and 65–66 (SG) each bind substrate. D71 functions as the Proton donor/acceptor in the catalytic mechanism. Residue H98 coordinates substrate.

Belongs to the methylglyoxal synthase family.

It carries out the reaction dihydroxyacetone phosphate = methylglyoxal + phosphate. Its function is as follows. Catalyzes the formation of methylglyoxal from dihydroxyacetone phosphate. In Erwinia tasmaniensis (strain DSM 17950 / CFBP 7177 / CIP 109463 / NCPPB 4357 / Et1/99), this protein is Methylglyoxal synthase.